The following is a 250-amino-acid chain: Adenosylcobinamide-GDP ribazoletransferase (250 aa).

Transmembrane regions (helical) follow at residues 31-51, 55-75, 106-126, 133-153, 187-207, and 230-250; these read ISYLPLVGLIIGGFNAIVYFV, FILGTLPIVLALLANTIITGA, VGTNGAIAIVFDFMLRYAVLN, IIIALILSPVVAKTVVTLLMC, IGYVLIGYKYVALLLITVLFI, and NEIAEIIFMLALLSFKGCGLL.

The protein belongs to the CobS family. Mg(2+) serves as cofactor.

Its subcellular location is the cell membrane. The catalysed reaction is alpha-ribazole + adenosylcob(III)inamide-GDP = adenosylcob(III)alamin + GMP + H(+). The enzyme catalyses alpha-ribazole 5'-phosphate + adenosylcob(III)inamide-GDP = adenosylcob(III)alamin 5'-phosphate + GMP + H(+). The protein operates within cofactor biosynthesis; adenosylcobalamin biosynthesis; adenosylcobalamin from cob(II)yrinate a,c-diamide: step 7/7. Joins adenosylcobinamide-GDP and alpha-ribazole to generate adenosylcobalamin (Ado-cobalamin). Also synthesizes adenosylcobalamin 5'-phosphate from adenosylcobinamide-GDP and alpha-ribazole 5'-phosphate. The chain is Adenosylcobinamide-GDP ribazoletransferase from Clostridium novyi (strain NT).